The primary structure comprises 530 residues: Netrin-G2 (530 aa).

The N-terminal stretch at 1-17 (MLHLLALFLHCLPLASG) is a signal peptide. 3 cysteine pairs are disulfide-bonded: Cys22/Cys39, Cys61/Cys81, and Cys69/Cys77. The Laminin N-terminal domain occupies 35–286 (EFYACQPKVM…AISNIEVIGR (252 aa)). The interval 69-88 (CSHENPYLCSNECDASNPDL) is NGL discriminant loop I. N-linked (GlcNAc...) asparagine glycans are attached at residues Asn122 and Asn128. A disulfide bridge links Cys171 with Cys195. An NGL discriminant loop II region spans residues 201–203 (RWA). Residues 264 to 267 (TYVQ) are NGL discriminant loop III. Disulfide bonds link Cys287–Cys296, Cys289–Cys305, Cys307–Cys316, Cys319–Cys344, Cys353–Cys362, Cys355–Cys373, Cys376–Cys385, Cys388–Cys406, Cys409–Cys421, Cys411–Cys427, Cys429–Cys438, Cys441–Cys451, Cys456–Cys469, Cys463–Cys475, and Cys477–Cys486. 3 consecutive Laminin EGF-like domains span residues 287–346 (CKCN…ACAT), 353–408 (CECY…VCIE), and 409–453 (CNCN…GCYP). Residue Asn310 is glycosylated (N-linked (GlcNAc...) asparagine). N-linked (GlcNAc...) asparagine glycosylation is present at Asn395. Asn422 carries an N-linked (GlcNAc...) asparagine glycan. Gly507 carries GPI-anchor amidated glycine lipidation. The propeptide at 508 to 530 (AAPRPATLLGCLLLLGLAARLGR) is removed in mature form.

Interacts with LRRC4. In terms of processing, N-glycosylated.

It is found in the cell membrane. Involved in controlling patterning and neuronal circuit formation at the laminar, cellular, subcellular and synaptic levels. Promotes neurite outgrowth of both axons and dendrites. In Homo sapiens (Human), this protein is Netrin-G2.